Consider the following 294-residue polypeptide: Large ribosomal subunit protein uL18A (294 aa).

At Ser-10 the chain carries Phosphoserine. Tyr-12 bears the Phosphotyrosine mark. Ser-81 is subject to Phosphoserine.

This sequence belongs to the universal ribosomal protein uL18 family. As to quaternary structure, component of the large ribosomal subunit (LSU). Mature yeast ribosomes consist of a small (40S) and a large (60S) subunit. The 40S small subunit contains 1 molecule of ribosomal RNA (18S rRNA) and 33 different proteins (encoded by 57 genes). The large 60S subunit contains 3 rRNA molecules (25S, 5.8S and 5S rRNA) and 46 different proteins (encoded by 81 genes). Component of a hexameric 5S RNP precursor complex, composed of 5S RNA, rrs1, rpf2, rpl5a/rpl5b, rpl11a/rpl11b and syo1; this complex acts as a precursor for ribosome assembly. rpl5a/rpl5b/uL18 forms a heterotrimeric complex with syo1 and rpl11a/rpl11b/uL5. Interaction of this complex with KAP104 allows the nuclear import of the heterotrimer.

It localises to the cytoplasm. It is found in the nucleus. Functionally, component of the ribosome, a large ribonucleoprotein complex responsible for the synthesis of proteins in the cell. The small ribosomal subunit (SSU) binds messenger RNAs (mRNAs) and translates the encoded message by selecting cognate aminoacyl-transfer RNA (tRNA) molecules. The large subunit (LSU) contains the ribosomal catalytic site termed the peptidyl transferase center (PTC), which catalyzes the formation of peptide bonds, thereby polymerizing the amino acids delivered by tRNAs into a polypeptide chain. The nascent polypeptides leave the ribosome through a tunnel in the LSU and interact with protein factors that function in enzymatic processing, targeting, and the membrane insertion of nascent chains at the exit of the ribosomal tunnel. This chain is Large ribosomal subunit protein uL18A (rpl501), found in Schizosaccharomyces pombe (strain 972 / ATCC 24843) (Fission yeast).